Here is a 239-residue protein sequence, read N- to C-terminus: MMKGRSLSAEDRARLETAIGYQFAEKERLDRALTHSSARNARASNYQRLEFLGDRVLGLCVAELLFQTFLDANEGELSVRLNQLVSAESCARVADELSLHEYIRTGSDVKKITGKHMMNVRADVVESLIAAIYLDGGLEAARRFVLRHWTDRAASADGARRDAKTELQEWAHAKFGAAPRYRTDDRSGPDHDPRFTVTVEVDGIAPETGTDRSKRGAEQIAAMRLLEREGVWQKRSAGN.

Residues arginine 12–glycine 137 enclose the RNase III domain. Glutamate 50 is a binding site for Mg(2+). Aspartate 54 is a catalytic residue. The Mg(2+) site is built by aspartate 123 and glutamate 126. Glutamate 126 is an active-site residue. A DRBM domain is found at aspartate 162–valine 231.

It belongs to the ribonuclease III family. As to quaternary structure, homodimer. Mg(2+) is required as a cofactor.

The protein localises to the cytoplasm. The catalysed reaction is Endonucleolytic cleavage to 5'-phosphomonoester.. In terms of biological role, digests double-stranded RNA. Involved in the processing of primary rRNA transcript to yield the immediate precursors to the large and small rRNAs (23S and 16S). Processes some mRNAs, and tRNAs when they are encoded in the rRNA operon. Processes pre-crRNA and tracrRNA of type II CRISPR loci if present in the organism. The polypeptide is Ribonuclease 3 (Sinorhizobium fredii (strain NBRC 101917 / NGR234)).